The following is a 731-amino-acid chain: Auxin response factor 3 (731 aa).

Positions 1–22 (MASSASSSSSPSSRPPLMALPS) are enriched in low complexity. The interval 1–41 (MASSASSSSSPSSRPPLMALPSFYRPPWPSERGGEQRATDC) is disordered. The TF-B3 DNA-binding region spans 191-293 (FCKTLTASDT…ELRLGVRRAT (103 aa)).

Belongs to the ARF family. Homo and heterodimers. Expressed in roots, culms, leaves and young panicles.

The protein localises to the nucleus. Its function is as follows. Auxin response factors (ARFs) are transcriptional factors that bind specifically to the DNA sequence 5'-TGTCTC-3' found in the auxin-responsive promoter elements (AuxREs). In Oryza sativa subsp. japonica (Rice), this protein is Auxin response factor 3 (ARF3).